Consider the following 176-residue polypeptide: Flavodoxin (176 aa).

In terms of domain architecture, Flavodoxin-like spans 4-165; that stretch reads IGIFFGSDTG…RVEKWVKQVA (162 aa).

This sequence belongs to the flavodoxin family. It depends on FMN as a cofactor.

In terms of biological role, low-potential electron donor to a number of redox enzymes. The protein is Flavodoxin (fldA) of Klebsiella pneumoniae.